The chain runs to 56 residues: Large ribosomal subunit protein bL33 (56 aa).

The protein belongs to the bacterial ribosomal protein bL33 family.

This chain is Large ribosomal subunit protein bL33, found in Rickettsia bellii (strain OSU 85-389).